The chain runs to 219 residues: Antigen 5 like allergen Cul n 1 (219 aa).

Residues 1-19 (MIKKLSIVILFSCISFVLS) form the signal peptide. 3 disulfide bridges follow: Cys-23-Cys-45, Cys-28-Cys-124, and Cys-55-Cys-117. The SCP domain occupies 73–211 (LKVHNRLRNK…RHSGNKYFFW (139 aa)).

The protein belongs to the CRISP family. As to expression, expressed in salivary glands.

The protein localises to the secreted. In Culicoides nubeculosus (Biting midge), this protein is Antigen 5 like allergen Cul n 1.